The following is a 431-amino-acid chain: MTKLHYKVKDISLAAWGRKEIEIAENEMPGLMTLRKKYGPAQILKGARIAGCLHMTIQTAVLIETLTALGAQVQWSSCNIFSTQDQAAAAIAATGVPVYAWKGETEEEYNWCVEQTIVFQDGQPLNMILDDGGDLTNLVHEKYPQFLAGIKGISEETTTGVHNLYKMFKEGKLKVPAINVNDSVTKSKFDNLYGCRESLIDGIKRATDVMIAGKVAVVAGYGDVGKGCAQSLSKMGARVLVTEIDPINALQACMDGYQIVTMETAAPLSNIFVTTTGCRDIVRGEHFAVMKEDAIVCNIGHFDCEIDVAWLNANAKKDTVKPQVDRYTLANGVHIILLAEGRLVNLGCGTGHPSFVMSNSFCNQTLAQIALWTKTEEYPLGVHFLPKILDEEVARLHLDQLGAKLTTLTEKQSEYLSVPVAGPYKVDHYRY.

Positions 56, 131, and 156 each coordinate substrate. Residue Thr157–Thr159 participates in NAD(+) binding. Residues Lys186 and Asp190 each coordinate substrate. NAD(+) is bound by residues Asn191, Gly222–Gly227, Glu243, Ile299–His301, and Asn345.

Belongs to the adenosylhomocysteinase family. Homotetramer. It depends on NAD(+) as a cofactor.

It carries out the reaction S-adenosyl-L-homocysteine + H2O = L-homocysteine + adenosine. The protein operates within amino-acid biosynthesis; L-homocysteine biosynthesis; L-homocysteine from S-adenosyl-L-homocysteine: step 1/1. Functionally, adenosylhomocysteine is a competitive inhibitor of S-adenosyl-L-methionine-dependent methyl transferase reactions; therefore adenosylhomocysteinase may play a key role in the control of methylations via regulation of the intracellular concentration of adenosylhomocysteine. The polypeptide is Adenosylhomocysteinase (sahA) (Dictyostelium discoideum (Social amoeba)).